The chain runs to 263 residues: Aquaporin Lacbi1:247946 (263 aa).

The Cytoplasmic segment spans residues 1–18 (MKLTISHHKCAIRKVMAE). Residues 19 to 39 (FVGVALLVIFGAGTACQVVLS) traverse the membrane as a helical segment. Topologically, residues 40-45 (TNPSSF) are extracellular. The helical transmembrane segment at 46 to 66 (LSINFGWAIGIATGAWVSAGI) threads the bilayer. The Cytoplasmic portion of the chain corresponds to 67 to 89 (SGGHINPAITIAMATYRGFPWRE). The short motif at 72–74 (NPA) is the NPA 1 element. Residues 90 to 110 (VPGYIFAQALGGFVGAALVYA) traverse the membrane as a helical segment. Residues 111 to 143 (NYFHAIDIFEGGHIRTQATASLFATFALPYMTQ) lie on the Extracellular side of the membrane. The chain crosses the membrane as a helical span at residues 144 to 164 (ASCFFSEFLATAVLFIVFLAL). At 165 to 169 (NDKHN) the chain is on the cytoplasmic side. A helical membrane pass occupies residues 170–190 (GALTNGLLPFALFILFIGLGA). Residues 191-227 (SLGMQTGYAVNPARDFGPRLFLAMAGYGKAVFNYRRQ) lie on the Extracellular side of the membrane. An NPA 2 motif is present at residues 201–203 (NPA). The chain crosses the membrane as a helical span at residues 228–248 (YWIWAPIIAPILGAQAGGLLY). Over 249–263 (DTSIYNGDDSPIKWR) the chain is Cytoplasmic.

Belongs to the MIP/aquaporin (TC 1.A.8) family.

Its subcellular location is the membrane. The enzyme catalyses H2O(in) = H2O(out). Functionally, water channel required to facilitate the transport of water across membranes. Shows low but significant water conductivity, but no glycerol nor ammonium transport activities. The sequence is that of Aquaporin Lacbi1:247946 from Laccaria bicolor (strain S238N-H82 / ATCC MYA-4686) (Bicoloured deceiver).